Here is a 468-residue protein sequence, read N- to C-terminus: Chromosomal replication initiator protein DnaA (468 aa).

Positions 1–84 are domain I, interacts with DnaA modulators; it reads MSSSLWLQCL…RFEVGSKPIS (84 aa). Positions 84–131 are domain II; the sequence is SAPPRPQRTAADVAAATSAPAQMQARQSLHKPWESRGPEPVDDLNHRS. Residues 112 to 132 are disordered; the sequence is LHKPWESRGPEPVDDLNHRSN. Basic and acidic residues predominate over residues 114–129; it reads KPWESRGPEPVDDLNH. Positions 132 to 348 are domain III, AAA+ region; that stretch reads NVNPKHKFTN…GALNRVVANA (217 aa). Gly-176, Gly-178, Lys-179, and Thr-180 together coordinate ATP. Residues 349–468 are domain IV, binds dsDNA; sequence NFTGRAITID…YSNLIRTLSS (120 aa).

This sequence belongs to the DnaA family. Oligomerizes as a right-handed, spiral filament on DNA at oriC.

It localises to the cytoplasm. Its function is as follows. Plays an essential role in the initiation and regulation of chromosomal replication. ATP-DnaA binds to the origin of replication (oriC) to initiate formation of the DNA replication initiation complex once per cell cycle. Binds the DnaA box (a 9 base pair repeat at the origin) and separates the double-stranded (ds)DNA. Forms a right-handed helical filament on oriC DNA; dsDNA binds to the exterior of the filament while single-stranded (ss)DNA is stabiized in the filament's interior. The ATP-DnaA-oriC complex binds and stabilizes one strand of the AT-rich DNA unwinding element (DUE), permitting loading of DNA polymerase. After initiation quickly degrades to an ADP-DnaA complex that is not apt for DNA replication. Binds acidic phospholipids. The polypeptide is Chromosomal replication initiator protein DnaA (Aliivibrio salmonicida (strain LFI1238) (Vibrio salmonicida (strain LFI1238))).